Consider the following 654-residue polypeptide: Fructose-1,6-bisphosphatase class 3 (654 aa).

Belongs to the FBPase class 3 family. Mn(2+) serves as cofactor.

It catalyses the reaction beta-D-fructose 1,6-bisphosphate + H2O = beta-D-fructose 6-phosphate + phosphate. The protein operates within carbohydrate biosynthesis; gluconeogenesis. This Staphylococcus epidermidis (strain ATCC 35984 / DSM 28319 / BCRC 17069 / CCUG 31568 / BM 3577 / RP62A) protein is Fructose-1,6-bisphosphatase class 3.